The primary structure comprises 208 residues: Uracil phosphoribosyltransferase (208 aa).

5-phospho-alpha-D-ribose 1-diphosphate is bound by residues Arg-78, Arg-103, and 130 to 138 (DPMLATGHS). Residues Ile-193 and 198-200 (GDA) each bind uracil. A 5-phospho-alpha-D-ribose 1-diphosphate-binding site is contributed by Asp-199.

The protein belongs to the UPRTase family. Requires Mg(2+) as cofactor.

The enzyme catalyses UMP + diphosphate = 5-phospho-alpha-D-ribose 1-diphosphate + uracil. It participates in pyrimidine metabolism; UMP biosynthesis via salvage pathway; UMP from uracil: step 1/1. With respect to regulation, allosterically activated by GTP. Its function is as follows. Catalyzes the conversion of uracil and 5-phospho-alpha-D-ribose 1-diphosphate (PRPP) to UMP and diphosphate. This chain is Uracil phosphoribosyltransferase, found in Brucella anthropi (strain ATCC 49188 / DSM 6882 / CCUG 24695 / JCM 21032 / LMG 3331 / NBRC 15819 / NCTC 12168 / Alc 37) (Ochrobactrum anthropi).